The primary structure comprises 1330 residues: Fanconi anemia group I protein homolog (1330 aa).

Residue lysine 522 forms a Glycyl lysine isopeptide (Lys-Gly) (interchain with G-Cter in ubiquitin) linkage. Serine 555 bears the Phosphoserine mark. Threonine 558 is modified (phosphothreonine). At serine 729 the chain carries Phosphoserine. Position 948 is a phosphothreonine (threonine 948). Serine 1122 bears the Phosphoserine mark. Residues 1299–1330 (EDEEDENEEGTASAHTQQDREPAKKRRKKCLS) form a disordered region. The segment covering 1321–1330 (AKKRRKKCLS) has biased composition (basic residues).

Belongs to the Fanconi anemia group I protein family. Homodimer. Part of a FANCI-FANCD2 heterodimeric complex that binds and scans dsDNA for DNA damage. Interacts with FANCL. Interacts with MTMR15/FAN1. Interacts with POLN. Interacts with UBL5; the interaction promotes FANCI homodimerization. Monoubiquitinated by FANCL on Lys-522 during S phase and upon genotoxic stress. Deubiquitinated by USP1 as cells enter G2/M, or once DNA repair is completed. Monoubiquitination requires the FANCA-FANCB-FANCC-FANCE-FANCF-FANCG-FANCM complex. Ubiquitination is required for binding to chromatin, DNA repair, and normal cell cycle progression. Monoubiquitination is stimulated by DNA-binding. In terms of processing, phosphorylated in response to DNA damage by ATM and/or ATR. Phosphorylation of FANCI promotes ubiquitination of FANCD2, which prevents DNA release from the FANCI-FANCD2 complex.

The protein localises to the nucleus. It localises to the cytoplasm. Plays an essential role in the repair of DNA double-strand breaks by homologous recombination and in the repair of interstrand DNA cross-links (ICLs) by promoting FANCD2 monoubiquitination by FANCL and participating in recruitment to DNA repair sites. The FANCI-FANCD2 complex binds and scans double-stranded DNA (dsDNA) for DNA damage; this complex stalls at DNA junctions between double-stranded DNA and single-stranded DNA. Participates in S phase and G2 phase checkpoint activation upon DNA damage. The protein is Fanconi anemia group I protein homolog (Fanci) of Mus musculus (Mouse).